The following is a 193-amino-acid chain: Large ribosomal subunit protein eL19B (193 aa).

The tract at residues 157 to 179 (EQQDARRARAKAARQRRAKAVEE) is disordered. Over residues 164-174 (ARAKAARQRRA) the composition is skewed to basic residues.

It belongs to the eukaryotic ribosomal protein eL19 family. In terms of assembly, component of the large ribosomal subunit (LSU). Mature yeast ribosomes consist of a small (40S) and a large (60S) subunit. The 40S small subunit contains 1 molecule of ribosomal RNA (18S rRNA) and at least 33 different proteins. The large 60S subunit contains 3 rRNA molecules (25S, 5.8S and 5S rRNA) and at least 46 different proteins. eL19 lies in close proximity to the binding site for eukaryotic initiation factor eIF4G.

It is found in the cytoplasm. Component of the ribosome, a large ribonucleoprotein complex responsible for the synthesis of proteins in the cell. The small ribosomal subunit (SSU) binds messenger RNAs (mRNAs) and translates the encoded message by selecting cognate aminoacyl-transfer RNA (tRNA) molecules. The large subunit (LSU) contains the ribosomal catalytic site termed the peptidyl transferase center (PTC), which catalyzes the formation of peptide bonds, thereby polymerizing the amino acids delivered by tRNAs into a polypeptide chain. The nascent polypeptides leave the ribosome through a tunnel in the LSU and interact with protein factors that function in enzymatic processing, targeting, and the membrane insertion of nascent chains at the exit of the ribosomal tunnel. eL19 may play a role in the last stages of translation initiation, in particular subunit joining and shedding/releasing factors. In Schizosaccharomyces pombe (strain 972 / ATCC 24843) (Fission yeast), this protein is Large ribosomal subunit protein eL19B (rpl1902).